Consider the following 400-residue polypeptide: Transcription initiation factor IIF subunit beta (400 aa).

The segment covering methionine 1–valine 19 has biased composition (polar residues). The segment at methionine 1 to asparagine 47 is disordered. Serine 28, serine 34, and serine 56 each carry phosphoserine. Over residues leucine 33 to asparagine 47 the composition is skewed to acidic residues. 2 disordered regions span residues glutamine 165–aspartate 194 and threonine 366–valine 400. Positions lysine 174–histidine 189 are enriched in basic residues. Over residues alanine 386–valine 400 the composition is skewed to acidic residues.

This sequence belongs to the TFIIF beta subunit family. As to quaternary structure, TFIIF is composed of three different subunits: TFG1/RAP74, TFG2/RAP30 and TAF14.

Its subcellular location is the nucleus. In terms of biological role, TFIIF is a general transcription initiation factor that binds to RNA polymerase II. Its functions include the recruitment of RNA polymerase II to the promoter bound DNA-TBP-TFIIB complex, decreasing the affinity of RNA polymerase II for non-specific DNA, allowing for the subsequent recruitment of TFIIE and TFIIH, and facilitating RNA polymerase II elongation. The chain is Transcription initiation factor IIF subunit beta (TFG2) from Saccharomyces cerevisiae (strain ATCC 204508 / S288c) (Baker's yeast).